A 342-amino-acid chain; its full sequence is Fatty acid desaturase 6 (342 aa).

2 helical membrane-spanning segments follow: residues 39–59 (GVDCAILALSLLALPAGFLCL) and 63–83 (NILAFATGITILGVCHYTLTV). Residues 87–91 (HLATH) carry the Histidine box-1 motif. The chain crosses the membrane as a helical span at residues 100-120 (WSKILMIFFLEVCTAFSAEFA). The Histidine box-2 signature appears at 124–128 (HVNLH). Helical transmembrane passes span 151 to 171 (YVYMFLGPLLVPIITPLVALE) and 185 to 205 (LGFICLGLYSQYWLFMNVSGF). The short motif at 277-281 (HVEHH) is the Histidine box-3 element.

This sequence belongs to the fatty acid desaturase type 1 family.

The protein localises to the membrane. The protein operates within lipid metabolism; fatty acid metabolism. In Mus musculus (Mouse), this protein is Fatty acid desaturase 6 (Fads6).